We begin with the raw amino-acid sequence, 400 residues long: Dual specificity mitogen-activated protein kinase kinase 2 (400 aa).

An N-acetylmethionine modification is found at M1. Position 23 is a phosphoserine (S23). Residues 72-369 (FERISELGAG…LKLLTNHAFI (298 aa)) enclose the Protein kinase domain. Residues 78 to 86 (LGAGNGGVV) and K101 each bind ATP. Residue D194 is the Proton acceptor of the active site. Phosphoserine; by RAF occurs at positions 222 and 226. The segment at 282 to 310 (PVVDGADGEPHSVSPRPRPPGRPISGHGM) is disordered. S293, S295, and S306 each carry phosphoserine. Phosphothreonine is present on residues T394 and T396.

This sequence belongs to the protein kinase superfamily. STE Ser/Thr protein kinase family. MAP kinase kinase subfamily. In terms of assembly, interacts with MORG1. Interacts with SGK1. Interacts with KSR1. Interacts with KSR1 and BRAF; the interaction with KSR1 mediates KSR1-BRAF dimerization. Interacts with GLS. It depends on Mg(2+) as a cofactor. Post-translationally, MAPKK is itself dependent on Ser/Thr phosphorylation for activity catalyzed by MAP kinase kinase kinases (RAF or MEKK1). Phosphorylated by MAP2K1/MEK1. In terms of tissue distribution, expressed abundantly in the adult brain and muscle.

It localises to the cytoplasm. It is found in the membrane. The catalysed reaction is L-seryl-[protein] + ATP = O-phospho-L-seryl-[protein] + ADP + H(+). It carries out the reaction L-threonyl-[protein] + ATP = O-phospho-L-threonyl-[protein] + ADP + H(+). The enzyme catalyses L-tyrosyl-[protein] + ATP = O-phospho-L-tyrosyl-[protein] + ADP + H(+). In terms of biological role, catalyzes the concomitant phosphorylation of a threonine and a tyrosine residue in a Thr-Glu-Tyr sequence located in MAP kinases. Activates the ERK1 and ERK2 MAP kinases. Activates BRAF in a KSR1 or KSR2-dependent manner; by binding to KSR1 or KSR2 releases the inhibitory intramolecular interaction between KSR1 or KSR2 protein kinase and N-terminal domains which promotes KSR1 or KSR2-BRAF dimerization and BRAF activation. This chain is Dual specificity mitogen-activated protein kinase kinase 2 (Map2k2), found in Rattus norvegicus (Rat).